The primary structure comprises 216 residues: Ras-related protein Rab-5C (216 aa).

Ser-30, Ala-31, Gly-33, Lys-34, Ser-35, Ser-36, His-47, Glu-48, Thr-53, Gly-79, Asn-134, Lys-135, Asp-137, Ala-165, and Lys-166 together coordinate GTP. Ser-35 provides a ligand contact to Mg(2+). 2 short sequence motifs (switch) span residues 45–57 (QFHE…IGAA) and 78–94 (AGQE…YRGA). Thr-53 is a binding site for Mg(2+). Residues 184 to 216 (KNEPQNAPGGPGRNRVVDLQESSQPSRSQCCSN) are disordered. A compositionally biased stretch (polar residues) spans 203–216 (QESSQPSRSQCCSN). Residues Cys-213 and Cys-214 are each lipidated (S-geranylgeranyl cysteine).

The protein belongs to the small GTPase superfamily. Rab family. Mg(2+) is required as a cofactor. As to expression, detected in brain, ovary, rectum, small intestine, large intestine, liver, spleen, follicle and kidney (at protein level).

Its subcellular location is the cell membrane. The protein localises to the early endosome membrane. It carries out the reaction GTP + H2O = GDP + phosphate + H(+). Its activity is regulated as follows. Regulated by guanine nucleotide exchange factors (GEFs) which promote the exchange of bound GDP for free GTP. Regulated by GTPase activating proteins (GAPs) which increase the GTP hydrolysis activity. Inhibited by GDP dissociation inhibitors (GDIs). The small GTPases Rab are key regulators of intracellular membrane trafficking, from the formation of transport vesicles to their fusion with membranes. Rabs cycle between an inactive GDP-bound form and an active GTP-bound form that is able to recruit to membranes different sets of downstream effectors directly responsible for vesicle formation, movement, tethering and fusion. This Gallus gallus (Chicken) protein is Ras-related protein Rab-5C (RAB5C).